Consider the following 353-residue polypeptide: Photosystem II protein D1 (353 aa).

An N-acetylthreonine modification is found at threonine 2. Threonine 2 carries the post-translational modification Phosphothreonine. 3 consecutive transmembrane segments (helical) span residues 29-46 (YIGW…TATS), 118-133 (HFLL…EWEL), and 142-156 (WIAV…AATA). Histidine 118 lines the chlorophyll a pocket. Tyrosine 126 contributes to the pheophytin a binding site. Residues aspartate 170 and glutamate 189 each contribute to the [CaMn4O5] cluster site. A helical transmembrane segment spans residues 197–218 (FHMLGVAGVFGGSLFSAMHGSL). Histidine 198 serves as a coordination point for chlorophyll a. A quinone contacts are provided by residues histidine 215 and 264–265 (SF). Histidine 215 provides a ligand contact to Fe cation. Position 272 (histidine 272) interacts with Fe cation. A helical membrane pass occupies residues 274 to 288 (FLAAWPVVGIWFTAL). [CaMn4O5] cluster contacts are provided by histidine 332, glutamate 333, aspartate 342, and alanine 344. Residues 345-353 (AVESPSING) constitute a propeptide that is removed on maturation.

The protein belongs to the reaction center PufL/M/PsbA/D family. PSII is composed of 1 copy each of membrane proteins PsbA, PsbB, PsbC, PsbD, PsbE, PsbF, PsbH, PsbI, PsbJ, PsbK, PsbL, PsbM, PsbT, PsbX, PsbY, PsbZ, Psb30/Ycf12, at least 3 peripheral proteins of the oxygen-evolving complex and a large number of cofactors. It forms dimeric complexes. Requires The D1/D2 heterodimer binds P680, chlorophylls that are the primary electron donor of PSII, and subsequent electron acceptors. It shares a non-heme iron and each subunit binds pheophytin, quinone, additional chlorophylls, carotenoids and lipids. D1 provides most of the ligands for the Mn4-Ca-O5 cluster of the oxygen-evolving complex (OEC). There is also a Cl(-1) ion associated with D1 and D2, which is required for oxygen evolution. The PSII complex binds additional chlorophylls, carotenoids and specific lipids. as cofactor. Tyr-161 forms a radical intermediate that is referred to as redox-active TyrZ, YZ or Y-Z. Post-translationally, C-terminally processed by CTPA; processing is essential to allow assembly of the oxygen-evolving complex and thus photosynthetic growth.

The protein resides in the plastid. It localises to the chloroplast thylakoid membrane. The catalysed reaction is 2 a plastoquinone + 4 hnu + 2 H2O = 2 a plastoquinol + O2. Photosystem II (PSII) is a light-driven water:plastoquinone oxidoreductase that uses light energy to abstract electrons from H(2)O, generating O(2) and a proton gradient subsequently used for ATP formation. It consists of a core antenna complex that captures photons, and an electron transfer chain that converts photonic excitation into a charge separation. The D1/D2 (PsbA/PsbD) reaction center heterodimer binds P680, the primary electron donor of PSII as well as several subsequent electron acceptors. The chain is Photosystem II protein D1 from Sinapis alba (White mustard).